Consider the following 428-residue polypeptide: Adenosylhomocysteinase (428 aa).

Substrate contacts are provided by Thr-62, Asp-134, and Glu-159. Residue 160–162 (TTT) coordinates NAD(+). Residues Lys-189 and Asp-193 each coordinate substrate. NAD(+) is bound by residues Asn-194, 223-228 (GYGWCG), Glu-246, Asn-281, 302-304 (SGH), and Asn-349.

It belongs to the adenosylhomocysteinase family. NAD(+) serves as cofactor.

It localises to the cytoplasm. The catalysed reaction is S-adenosyl-L-homocysteine + H2O = L-homocysteine + adenosine. The protein operates within amino-acid biosynthesis; L-homocysteine biosynthesis; L-homocysteine from S-adenosyl-L-homocysteine: step 1/1. Its function is as follows. May play a key role in the regulation of the intracellular concentration of adenosylhomocysteine. The protein is Adenosylhomocysteinase of Gloeobacter violaceus (strain ATCC 29082 / PCC 7421).